Consider the following 609-residue polypeptide: Dihydroxy-acid dehydratase (609 aa).

Aspartate 82 serves as a coordination point for Mg(2+). Cysteine 123 contributes to the [2Fe-2S] cluster binding site. Mg(2+)-binding residues include aspartate 124 and lysine 125. Residue lysine 125 is modified to N6-carboxylysine. Position 192 (cysteine 192) interacts with [2Fe-2S] cluster. Residue glutamate 489 participates in Mg(2+) binding. Serine 515 acts as the Proton acceptor in catalysis.

It belongs to the IlvD/Edd family. Homodimer. The cofactor is [2Fe-2S] cluster. Mg(2+) is required as a cofactor.

It catalyses the reaction (2R)-2,3-dihydroxy-3-methylbutanoate = 3-methyl-2-oxobutanoate + H2O. It carries out the reaction (2R,3R)-2,3-dihydroxy-3-methylpentanoate = (S)-3-methyl-2-oxopentanoate + H2O. It functions in the pathway amino-acid biosynthesis; L-isoleucine biosynthesis; L-isoleucine from 2-oxobutanoate: step 3/4. It participates in amino-acid biosynthesis; L-valine biosynthesis; L-valine from pyruvate: step 3/4. In terms of biological role, functions in the biosynthesis of branched-chain amino acids. Catalyzes the dehydration of (2R,3R)-2,3-dihydroxy-3-methylpentanoate (2,3-dihydroxy-3-methylvalerate) into 2-oxo-3-methylpentanoate (2-oxo-3-methylvalerate) and of (2R)-2,3-dihydroxy-3-methylbutanoate (2,3-dihydroxyisovalerate) into 2-oxo-3-methylbutanoate (2-oxoisovalerate), the penultimate precursor to L-isoleucine and L-valine, respectively. This Azobacteroides pseudotrichonymphae genomovar. CFP2 protein is Dihydroxy-acid dehydratase.